We begin with the raw amino-acid sequence, 125 residues long: MGSMFSGNRMSKEEMEVVVNKAKEIVSAYPVVVFSKTYCGYCQRVKQLLTQLGATFKVLELDEMSDGGEIQSALSEWTGQTTVPNVFIKGNHIGGCDRVMETNKQGKLVPLLTEAGAIADNSSQL.

The region spanning 19-119 (VNKAKEIVSA…PLLTEAGAIA (101 aa)) is the Glutaredoxin domain. The cysteines at positions 39 and 42 are disulfide-linked.

It belongs to the glutaredoxin family. CPYC subfamily.

It localises to the cytoplasm. In terms of biological role, has a glutathione-disulfide oxidoreductase activity in the presence of NADPH and glutathione reductase. Reduces low molecular weight disulfides and proteins. The sequence is that of Glutaredoxin-C1 (GRXC1) from Arabidopsis thaliana (Mouse-ear cress).